We begin with the raw amino-acid sequence, 2798 residues long: Nipped-B-like protein (2798 aa).

2 stretches are compositionally biased toward polar residues: residues 128–173 (LSQN…QNSP) and 191–208 (HPSS…SVSS). The interval 128 to 338 (LSQNSMHSSP…IKLGKDEKDQ (211 aa)) is disordered. Phosphoserine is present on residues S150 and S162. Residues 234–249 (HHADNPRHGSSDDYLH) show a composition bias toward basic and acidic residues. Phosphoserine is present on residues S243, S256, S274, S280, S284, S301, S306, S318, and S350. The span at 482–500 (RESAIERERFSKEVQDKDK) shows a compositional bias: basic and acidic residues. A disordered region spans residues 482–940 (RESAIERERF…NKAEFPSYLL (459 aa)). Polar residues predominate over residues 523–534 (PASQETGSTGNG). Composition is skewed to basic and acidic residues over residues 562–572 (DSIKKPEETKQ), 593–625 (PENH…ESKP), 634–663 (KSNE…ESKQ), 672–685 (KQNE…KPND), and 694–899 (ENTK…DTNK). Phosphothreonine is present on residues T713 and T746. At S906 the chain carries Phosphoserine. Over residues 908–933 (NSKDDKRTEGNRSKVDSNKAHTDNKA) the composition is skewed to basic and acidic residues. A PxVxL motif motif is present at residues 990 to 1003 (NKGAKPVVVLQKLS). Disordered regions lie at residues 1011 to 1041 (IKDR…DQSV) and 1054 to 1186 (ESTM…TPEE). An N6-acetyllysine modification is found at K1076. Residues S1083, S1084, and S1090 each carry the phosphoserine modification. The segment covering 1083–1094 (SSDEDNDSDEAF) has biased composition (acidic residues). Residues 1103 to 1133 (KDDDKAWEYEERDRRSSGDHRRSGHSHDGRR) show a composition bias toward basic and acidic residues. A phosphoserine mark is found at S1144, S1146, and S1148. Y1153 carries the phosphotyrosine modification. S1154 is subject to Phosphoserine. Residues 1165–1176 (KMKKKEKQKKRK) are compositionally biased toward basic residues. T1183 is modified (phosphothreonine). S1191 is modified (phosphoserine). The segment covering 1685–1705 (AMKSQKDEESSDATHHAKELE) has biased composition (basic and acidic residues). The tract at residues 1685–1706 (AMKSQKDEESSDATHHAKELET) is disordered. HEAT repeat units lie at residues 1761-1799 (AQSF…VDPS), 1837-1875 (PQLA…EQPT), 1939-1978 (YDWF…HILK), 2221-2261 (VNLK…LKEM), and 2307-2345 (LIHP…KYAG). The span at 2467–2483 (VKDKRKERKTSPAKENE) shows a compositional bias: basic and acidic residues. Disordered regions lie at residues 2467–2514 (VKDK…DDIN) and 2645–2690 (TSLL…DSTE). Phosphoserine occurs at positions 2487, 2503, 2505, 2507, 2509, 2646, and 2652. The segment covering 2504-2513 (ESDSDSEDDI) has biased composition (acidic residues). Phosphothreonine is present on T2661. The residue at position 2666 (S2666) is a Phosphoserine.

This sequence belongs to the SCC2/Nipped-B family. As to quaternary structure, heterodimerizes with MAU2/SCC4 to form the cohesin loading complex. The NIPBL-MAU2 heterodimer interacts with the cohesin complex composed of SMC1A/B and SMC3 heterodimer, RAD21 and STAG1/SA1. NIPBL directly contacts all members of the complex, RAD21, SMC1A/B, SMC3 and STAG1. Interacts directly (via PxVxL motif) with CBX3 and CBX5. Interacts with ZNF609 (via N-terminus). Interacts with the multiprotein complex Integrator. Interacts with BRD4. In terms of tissue distribution, spermatocytes and oocytes (at protein level).

It localises to the nucleus. It is found in the chromosome. In terms of biological role, plays an important role in the loading of the cohesin complex on to DNA. Forms a heterodimeric complex (also known as cohesin loading complex) with MAU2/SCC4 which mediates the loading of the cohesin complex onto chromatin. Plays a role in cohesin loading at sites of DNA damage. Its recruitment to double-strand breaks (DSBs) sites occurs in a CBX3-, RNF8- and RNF168-dependent manner whereas its recruitment to UV irradiation-induced DNA damage sites occurs in a ATM-, ATR-, RNF8- and RNF168-dependent manner. Along with ZNF609, promotes cortical neuron migration during brain development by regulating the transcription of crucial genes in this process. Preferentially binds promoters containing paused RNA polymerase II. Up-regulates the expression of SEMA3A, NRP1, PLXND1 and GABBR2 genes, among others. The polypeptide is Nipped-B-like protein (Nipbl) (Mus musculus (Mouse)).